We begin with the raw amino-acid sequence, 226 residues long: Potassium/proton antiporter CemA (226 aa).

Helical transmembrane passes span Phe-7–Phe-27, Ile-111–Leu-131, and Ile-186–Ile-206.

Belongs to the CemA family.

It is found in the plastid. The protein localises to the chloroplast inner membrane. The enzyme catalyses K(+)(in) + H(+)(out) = K(+)(out) + H(+)(in). In terms of biological role, contributes to K(+)/H(+) antiport activity by supporting proton efflux to control proton extrusion and homeostasis in chloroplasts in a light-dependent manner to modulate photosynthesis. Prevents excessive induction of non-photochemical quenching (NPQ) under continuous-light conditions. Indirectly promotes efficient inorganic carbon uptake into chloroplasts. The chain is Potassium/proton antiporter CemA from Buxus microphylla (Littleleaf boxwood).